Here is a 450-residue protein sequence, read N- to C-terminus: C4-dicarboxylate transport protein (450 aa).

Transmembrane regions (helical) follow at residues 25–45 (VVFA…YGAA), 56–76 (LIKM…IASM), 90–110 (MAYF…VANV), 162–182 (ILQV…VGDA), 200–220 (LVNI…AFTI), 234–254 (LVLT…GAVA), 319–339 (IYMT…LTLG), and 367–387 (AATL…ILGV).

The protein belongs to the dicarboxylate/amino acid:cation symporter (DAACS) (TC 2.A.23) family.

Its subcellular location is the cell inner membrane. Responsible for the transport of dicarboxylates such as succinate, fumarate, and malate from the periplasm across the membrane. In Acidovorax ebreus (strain TPSY) (Diaphorobacter sp. (strain TPSY)), this protein is C4-dicarboxylate transport protein.